The following is a 132-amino-acid chain: Small ribosomal subunit protein uS9 (132 aa).

A disordered region spans residues 103–132 (NGLLTRDDRTKERKKPGLKRARKAPQYTKR). The segment covering 114-132 (ERKKPGLKRARKAPQYTKR) has biased composition (basic residues).

It belongs to the universal ribosomal protein uS9 family.

This Dehalococcoides mccartyi (strain CBDB1) protein is Small ribosomal subunit protein uS9.